The primary structure comprises 413 residues: Probable tRNA sulfurtransferase (413 aa).

Positions 61–171 (TRVLDRVTRV…EDGTYIFTEK (111 aa)) constitute a THUMP domain. ATP contacts are provided by residues 189–190 (ML), 214–215 (HF), arginine 275, glycine 297, and glutamine 306.

It belongs to the ThiI family.

The protein localises to the cytoplasm. The enzyme catalyses [ThiI sulfur-carrier protein]-S-sulfanyl-L-cysteine + a uridine in tRNA + 2 reduced [2Fe-2S]-[ferredoxin] + ATP + H(+) = [ThiI sulfur-carrier protein]-L-cysteine + a 4-thiouridine in tRNA + 2 oxidized [2Fe-2S]-[ferredoxin] + AMP + diphosphate. It catalyses the reaction [ThiS sulfur-carrier protein]-C-terminal Gly-Gly-AMP + S-sulfanyl-L-cysteinyl-[cysteine desulfurase] + AH2 = [ThiS sulfur-carrier protein]-C-terminal-Gly-aminoethanethioate + L-cysteinyl-[cysteine desulfurase] + A + AMP + 2 H(+). It functions in the pathway cofactor biosynthesis; thiamine diphosphate biosynthesis. Catalyzes the ATP-dependent transfer of a sulfur to tRNA to produce 4-thiouridine in position 8 of tRNAs, which functions as a near-UV photosensor. Also catalyzes the transfer of sulfur to the sulfur carrier protein ThiS, forming ThiS-thiocarboxylate. This is a step in the synthesis of thiazole, in the thiamine biosynthesis pathway. The sulfur is donated as persulfide by IscS. The sequence is that of Probable tRNA sulfurtransferase from Natranaerobius thermophilus (strain ATCC BAA-1301 / DSM 18059 / JW/NM-WN-LF).